The following is a 224-amino-acid chain: Peptide deformylase 3 (224 aa).

Fe cation-binding residues include Cys135 and His177. Residue Glu178 is part of the active site. His181 is a Fe cation binding site.

Belongs to the polypeptide deformylase family. Fe(2+) is required as a cofactor.

The catalysed reaction is N-terminal N-formyl-L-methionyl-[peptide] + H2O = N-terminal L-methionyl-[peptide] + formate. In terms of biological role, removes the formyl group from the N-terminal Met of newly synthesized proteins. Requires at least a dipeptide for an efficient rate of reaction. N-terminal L-methionine is a prerequisite for activity but the enzyme has broad specificity at other positions. The sequence is that of Peptide deformylase 3 from Streptomyces avermitilis (strain ATCC 31267 / DSM 46492 / JCM 5070 / NBRC 14893 / NCIMB 12804 / NRRL 8165 / MA-4680).